A 91-amino-acid polypeptide reads, in one-letter code: Small ribosomal subunit protein uS19m (91 aa).

The protein belongs to the universal ribosomal protein uS19 family. As to quaternary structure, component of the mitochondrial small ribosomal subunit (mt-SSU). Mature yeast 74S mitochondrial ribosomes consist of a small (37S) and a large (54S) subunit. The 37S small subunit contains a 15S ribosomal RNA (15S mt-rRNA) and 34 different proteins. The 54S large subunit contains a 21S rRNA (21S mt-rRNA) and 46 different proteins.

It localises to the mitochondrion. In terms of biological role, component of the mitochondrial ribosome (mitoribosome), a dedicated translation machinery responsible for the synthesis of mitochondrial genome-encoded proteins, including at least some of the essential transmembrane subunits of the mitochondrial respiratory chain. The mitoribosomes are attached to the mitochondrial inner membrane and translation products are cotranslationally integrated into the membrane. The polypeptide is Small ribosomal subunit protein uS19m (RSM19) (Saccharomyces cerevisiae (strain ATCC 204508 / S288c) (Baker's yeast)).